The chain runs to 108 residues: Translation initiation factor 1A (108 aa).

The region spanning 11–85 (SVKEVPKPAE…NKCDIIYKYS (75 aa)) is the S1-like domain.

Belongs to the eIF-1A family.

Seems to be required for maximal rate of protein biosynthesis. Enhances ribosome dissociation into subunits and stabilizes the binding of the initiator Met-tRNA(I) to 40 S ribosomal subunits. The protein is Translation initiation factor 1A (eIF1A) of Sulfurisphaera tokodaii (strain DSM 16993 / JCM 10545 / NBRC 100140 / 7) (Sulfolobus tokodaii).